Consider the following 740-residue polypeptide: Arf-GAP with coiled-coil, ANK repeat and PH domain-containing protein 1 (740 aa).

A BAR domain is found at 1–226 (MTVKLDFEEC…RKELGAQLHQ (226 aa)). The segment at 1 to 382 (MTVKLDFEEC…RGPGQGSGHL (382 aa)) is required for formation of endosomal tubules when overexpressed with PIP5K1C. The region spanning 265-360 (GLVMEGHLFK…WVSAVQSSIA (96 aa)) is the PH domain. Residues 405–527 (GHVVAQVQSV…KFLTKLPEIR (123 aa)) form the Arf-GAP domain. Residues 405 to 740 (GHVVAQVQSV…SRRSHDLHTL (336 aa)) are required for interaction with GULP1. The segment at 420-443 (CCDCREPAPEWASINLGVTLCIQC) adopts a C4-type zinc-finger fold. Tyr-485 bears the 3'-nitrotyrosine mark. Residues 525-566 (EIRGRRGGRGRPRGQPPVPPKPSIRPRPGSLRSKPEPPSEDL) form a prevents interaction with ITGB1 when S-554 is not phosphorylated region. The disordered stretch occupies residues 525-581 (EIRGRRGGRGRPRGQPPVPPKPSIRPRPGSLRSKPEPPSEDLGSLHPGALLFRASGH). Pro residues predominate over residues 538–549 (GQPPVPPKPSIR). Ser-554 carries the phosphoserine; by PKB modification. 3 ANK repeats span residues 606-635 (DNAT…NVNQ), 639-668 (AGRG…DLGA), and 672-702 (EGRD…EAEA).

In terms of assembly, banana-shaped homodimer laterally assembling into tetramers, the tetramers further pack helically onto the membrane. Interacts with GTP-bound ARF6. Interacts with third cytoplasmic loop of SLC2A4/GLUT4. Interacts with CLTC. Interacts with GULP1. Forms a complex with GDP-bound ARF6 and GULP1. Interacts with ITGB1; required for ITGB1 recycling. Post-translationally, phosphorylation at Ser-554 by PKB is required for interaction with ITGB1, export of ITGB1 from recycling endosomes to the cell surface and ITGB1-dependent cell migration. In terms of tissue distribution, highest level in lung and spleen. Low level in heart, kidney, liver and pancreas.

It is found in the recycling endosome membrane. With respect to regulation, GAP activity stimulated by phosphatidylinositol 4,5-bisphosphate (PIP2) and phosphatidic acid. In terms of biological role, GTPase-activating protein (GAP) for ADP ribosylation factor 6 (ARF6) required for clathrin-dependent export of proteins from recycling endosomes to trans-Golgi network and cell surface. Required for regulated export of ITGB1 from recycling endosomes to the cell surface and ITGB1-dependent cell migration. The polypeptide is Arf-GAP with coiled-coil, ANK repeat and PH domain-containing protein 1 (ACAP1) (Homo sapiens (Human)).